The primary structure comprises 485 residues: Aspartyl/glutamyl-tRNA(Asn/Gln) amidotransferase subunit B (485 aa).

This sequence belongs to the GatB/GatE family. GatB subfamily. Heterotrimer of A, B and C subunits.

The enzyme catalyses L-glutamyl-tRNA(Gln) + L-glutamine + ATP + H2O = L-glutaminyl-tRNA(Gln) + L-glutamate + ADP + phosphate + H(+). It catalyses the reaction L-aspartyl-tRNA(Asn) + L-glutamine + ATP + H2O = L-asparaginyl-tRNA(Asn) + L-glutamate + ADP + phosphate + 2 H(+). Functionally, allows the formation of correctly charged Asn-tRNA(Asn) or Gln-tRNA(Gln) through the transamidation of misacylated Asp-tRNA(Asn) or Glu-tRNA(Gln) in organisms which lack either or both of asparaginyl-tRNA or glutaminyl-tRNA synthetases. The reaction takes place in the presence of glutamine and ATP through an activated phospho-Asp-tRNA(Asn) or phospho-Glu-tRNA(Gln). This is Aspartyl/glutamyl-tRNA(Asn/Gln) amidotransferase subunit B from Cupriavidus taiwanensis (strain DSM 17343 / BCRC 17206 / CCUG 44338 / CIP 107171 / LMG 19424 / R1) (Ralstonia taiwanensis (strain LMG 19424)).